The following is a 93-amino-acid chain: Small ribosomal subunit protein bS16 (93 aa).

The protein belongs to the bacterial ribosomal protein bS16 family.

The protein is Small ribosomal subunit protein bS16 of Dictyoglomus thermophilum (strain ATCC 35947 / DSM 3960 / H-6-12).